The primary structure comprises 895 residues: Protein translocase subunit SecA (895 aa).

ATP is bound by residues Gln-87, Gly-105 to Thr-109, and Asp-512. Residues Thr-833–Thr-852 are compositionally biased toward basic and acidic residues. The tract at residues Thr-833–Tyr-895 is disordered. Zn(2+) contacts are provided by Cys-877, Cys-879, Cys-888, and His-889. A compositionally biased stretch (basic residues) spans Lys-883 to Tyr-895.

This sequence belongs to the SecA family. Monomer and homodimer. Part of the essential Sec protein translocation apparatus which comprises SecA, SecYEG and auxiliary proteins SecDF-YajC and YidC. Zn(2+) serves as cofactor.

It is found in the cell inner membrane. Its subcellular location is the cytoplasm. It catalyses the reaction ATP + H2O + cellular proteinSide 1 = ADP + phosphate + cellular proteinSide 2.. Functionally, part of the Sec protein translocase complex. Interacts with the SecYEG preprotein conducting channel. Has a central role in coupling the hydrolysis of ATP to the transfer of proteins into and across the cell membrane, serving both as a receptor for the preprotein-SecB complex and as an ATP-driven molecular motor driving the stepwise translocation of polypeptide chains across the membrane. The sequence is that of Protein translocase subunit SecA from Pasteurella multocida (strain Pm70).